The sequence spans 109 residues: MAAKKMHVKKDDMVMVIAGKEKGKTGKIMRVLPGKGRVVVENLNVVKRHTRPNRVNTQGGIVEKEAPLDASNVALVCSACNKPTRTGVRVLEDGTKTRFCKKCNETLDK.

Belongs to the universal ribosomal protein uL24 family. As to quaternary structure, part of the 50S ribosomal subunit.

One of two assembly initiator proteins, it binds directly to the 5'-end of the 23S rRNA, where it nucleates assembly of the 50S subunit. In terms of biological role, one of the proteins that surrounds the polypeptide exit tunnel on the outside of the subunit. The polypeptide is Large ribosomal subunit protein uL24 (Syntrophotalea carbinolica (strain DSM 2380 / NBRC 103641 / GraBd1) (Pelobacter carbinolicus)).